We begin with the raw amino-acid sequence, 67 residues long: Metallothionein-A (67 aa).

Belongs to the metallothionein superfamily. Type 4 family.

Its function is as follows. Metallothioneins have a high content of cysteine residues that bind various heavy metals. This is Metallothionein-A from Sphaerechinus granularis (Purple sea urchin).